A 62-amino-acid polypeptide reads, in one-letter code: Double zinc ribbon protein TK0111 (62 aa).

Residues Cys-13, Cys-16, Cys-31, Cys-34, Cys-42, Cys-45, Cys-54, and Cys-57 each coordinate Zn(2+).

In terms of assembly, crystallized in association with 70S ribosomes. Requires Zn(2+) as cofactor.

The protein is Double zinc ribbon protein TK0111 of Thermococcus kodakarensis (strain ATCC BAA-918 / JCM 12380 / KOD1) (Pyrococcus kodakaraensis (strain KOD1)).